A 338-amino-acid chain; its full sequence is Photosystem II assembly lipoprotein Ycf48 (338 aa).

Positions 1–23 (MKKIITSFPNLLLSILLCFVLSS) are cleaved as a signal peptide. Residue cysteine 24 is the site of N-palmitoyl cysteine attachment. Cysteine 24 carries the S-diacylglycerol cysteine lipid modification.

It belongs to the Ycf48 family. Part of early PSII assembly complexes which includes D1 (psbA) and PsbI; not found in mature PSII. Binds to the lumenal side of PSII complexes. Interacts with YidC.

It is found in the cellular thylakoid membrane. Its function is as follows. A factor required for optimal assembly of photosystem II (PSII), acting in the early stages of PSII assembly. Also plays a role in replacement of photodamaged D1 (psbA). Assists YidC in synthesis of chlorophyll-binding proteins. This Prochlorococcus marinus (strain MIT 9312) protein is Photosystem II assembly lipoprotein Ycf48.